Consider the following 293-residue polypeptide: Phycoerythrin class 2 subunit gamma, linker polypeptide (293 aa).

C49 lines the phycourobilin pocket. The 180-residue stretch at 50-229 (AAMGIGIGPR…LGGMKVAISD (180 aa)) folds into the PBS-linker domain.

Post-translationally, contains one covalently linked phycourobilin chromophore.

The protein resides in the cellular thylakoid membrane. Functionally, this protein is a bile pigment-bearing rod linker polypeptide that associates with C-phycoerythrin. This chain is Phycoerythrin class 2 subunit gamma, linker polypeptide (mpeC), found in Synechococcus sp. (strain WH8020).